The sequence spans 737 residues: ARMADILLO BTB ARABIDOPSIS PROTEIN 1 (737 aa).

ARM repeat units lie at residues 112–154 (DENV…KDCA), 165–212 (PGYQ…NIAH), 215–254 (PRIK…TVSF), 257–296 (DENK…NLVH), 299–338 (PDIK…QFAA), 341–380 (SDCK…RLAQ), 382–421 (AHNQ…GLAD), 456–495 (LKRL…HLCD), and 497–536 (KDGK…ELAK). The BTB domain occupies 568–635 (SDVTFLIDGK…IYSGRINIAK (68 aa)).

In terms of assembly, forms a heterodimeric complex with TCP24. Interacts with the origin recognition complex (preRC) components ORC1A, ORC1B, CDT1A and CDT1B. Interacts with DUF7/AIP1. In terms of tissue distribution, weakly expressed in the emerging lateral roots and mainly expressed in the shoot apex, young leaves and flower buds.

The protein localises to the nucleus. It participates in protein modification; protein ubiquitination. May act as a substrate-specific adapter of an E3 ubiquitin-protein ligase complex (CUL3-RBX1-BTB) which mediates the ubiquitination and subsequent proteasomal degradation of target proteins. In association with TCP24, exerts a negative role in cell proliferation in leaves, possibly by inhibiting mitotic DNA replication. The sequence is that of ARMADILLO BTB ARABIDOPSIS PROTEIN 1 (ABAP1) from Arabidopsis thaliana (Mouse-ear cress).